Reading from the N-terminus, the 266-residue chain is MSSPAKMYDIEILPGGFRPARPSMDVAGHIVKTPESFTVLPRGMGVCKTKIEIKRVPFGGAIYVYNIESLLLQQRISTMGGVVAGKVDELVIYFANFSDVPVKFTRGDPVAQLVLAPASIESATVKSYVGESVKPIVGEDDLIKKYQVKLIDLDKGGSGVETITLADNEYGVFTELPDAVDKFNDVIPRVYTVPEQIINVGTKDFMQPIVMWKDDYDAVKNMDNLKGLIKGLMNVDPAFQPLLKINDGRMPLAKLDVRRYYNRETL.

This is an uncharacterized protein from Ostreid herpesvirus 1 (isolate France) (OsHV-1).